The chain runs to 389 residues: Chitinase-3-like protein 1 (389 aa).

The first 29 residues, M1–A29, serve as a signal peptide directing secretion. A GH18 domain is found at Y30–A389. C34 and C59 are joined by a disulfide. N68 carries N-linked (GlcNAc...) asparagine glycosylation. Chitin contacts are provided by residues E79 to W80, G106 to K109, Y150, and M213 to D216. C309 and C372 are oxidised to a cystine. Residues Q333–V347 form an important for AKT1 activation and IL8 production region. Position 361 (W361) interacts with chitin.

The protein belongs to the glycosyl hydrolase 18 family. As to quaternary structure, monomer. Detected in lung in pulmonary macrophages and alveolar type 2 cells and in bronchoalveolar lavage (BAL) fluids. Expressed in mammary tumor cells (at protein level). Expressed in lung. Not detected in non-inflammatory colon.

Its subcellular location is the secreted. It localises to the extracellular space. It is found in the cytoplasm. The protein resides in the endoplasmic reticulum. Carbohydrate-binding lectin with a preference for chitin. Has no chitinase activity. May play a role in tissue remodeling and in the capacity of cells to respond to and cope with changes in their environment. Plays a role in T-helper cell type 2 (Th2) inflammatory response and IL-13-induced inflammation, regulating allergen sensitization, inflammatory cell apoptosis, dendritic cell accumulation and M2 macrophage differentiation. Facilitates invasion of pathogenic enteric bacteria into colonic mucosa and lymphoid organs. Mediates activation of AKT1 signaling pathway and subsequent IL8 production in colonic epithelial cells. Regulates antibacterial responses in lung by contributing to macrophage bacterial killing, controlling bacterial dissemination and augmenting host tolerance. Also regulates hyperoxia-induced injury, inflammation and epithelial apoptosis in lung. The sequence is that of Chitinase-3-like protein 1 (Chi3l1) from Mus musculus (Mouse).